Reading from the N-terminus, the 231-residue chain is MDIILASGSPRRRELLSRAQLEFTIISVDIDETPYQDELPKDYIVRMVAAKAEAAATQLNIQLKNNEAHSSKSLLSQPIILLTSDTIGVLPDGKTVLIKPSNREDAYHMWQQMSDSTHEVWTAVQATQLSLHSKHTDEFDTEPVWQIINQKQIIERTEVTFIALTPEMMSDYWDGGEPADKAGGYGIQGLGAAWVSRINGSYTNVVGLPLAQTLALIKEMTNTAMLENFDA.

Residue Asp-85 is the Proton acceptor of the active site.

It belongs to the Maf family. YhdE subfamily. Requires a divalent metal cation as cofactor.

It localises to the cytoplasm. The catalysed reaction is dTTP + H2O = dTMP + diphosphate + H(+). It catalyses the reaction UTP + H2O = UMP + diphosphate + H(+). In terms of biological role, nucleoside triphosphate pyrophosphatase that hydrolyzes dTTP and UTP. May have a dual role in cell division arrest and in preventing the incorporation of modified nucleotides into cellular nucleic acids. The polypeptide is dTTP/UTP pyrophosphatase (Psychrobacter arcticus (strain DSM 17307 / VKM B-2377 / 273-4)).